The chain runs to 604 residues: Prostaglandin G/H synthase 2 (604 aa).

Residues 1–17 (MLARALLLCAAVALSGA) form the signal peptide. An EGF-like domain is found at 18–55 (ANPCCSHPCQNRGVCMSVGFDQYKCDCTRTGFYGENCT). Disulfide bonds link Cys21/Cys32, Cys22/Cys145, Cys26/Cys42, and Cys44/Cys54. An N-linked (GlcNAc...) asparagine glycan is attached at Asn53. Substrate is bound at residue Arg106. N-linked (GlcNAc...) asparagine glycosylation occurs at Asn130. His193 acts as the Proton acceptor in catalysis. Tyr341 provides a ligand contact to substrate. Tyr371 (for cyclooxygenase activity) is an active-site residue. Residue His374 coordinates heme b. N-linked (GlcNAc...) asparagine glycosylation is present at Asn396. Cys526 bears the S-nitrosocysteine mark. Cys555 and Cys561 are disulfide-bonded. An O-acetylserine modification is found at Ser565. Asn580 carries N-linked (GlcNAc...) asparagine glycosylation.

This sequence belongs to the prostaglandin G/H synthase family. Homodimer. Heme b is required as a cofactor. Post-translationally, S-nitrosylation by NOS2 (iNOS) activates enzyme activity. S-nitrosylation may take place on different Cys residues in addition to Cys-526. Acetylated at Ser-565 by SPHK1. During neuroinflammation, acetylation by SPHK1 promotes neuronal secretion of specialized preresolving mediators (SPMs), especially 15-R-lipoxin A4, which results in an increase of phagocytic microglia.

It localises to the microsome membrane. The protein resides in the endoplasmic reticulum membrane. The protein localises to the nucleus inner membrane. It is found in the nucleus outer membrane. The catalysed reaction is (5Z,8Z,11Z,14Z)-eicosatetraenoate + AH2 + 2 O2 = prostaglandin H2 + A + H2O. The enzyme catalyses (5Z,8Z,11Z,14Z)-eicosatetraenoate + 2 O2 = prostaglandin G2. It catalyses the reaction prostaglandin G2 + AH2 = prostaglandin H2 + A + H2O. It carries out the reaction (5Z,8Z,11Z,14Z,17Z)-eicosapentaenoate + 2 O2 = prostaglandin G3. The catalysed reaction is prostaglandin G3 + AH2 = prostaglandin H3 + A + H2O. The enzyme catalyses (8Z,11Z,14Z)-eicosatrienoate + 2 O2 = prostaglandin G1. It catalyses the reaction prostaglandin G1 + AH2 = prostaglandin H1 + A + H2O. It carries out the reaction 2-(5Z,8Z,11Z,14Z)-eicosatetraenoyl-sn-glycero-3-phosphoethanolamine + 2 O2 = 2-(prostaglandin G2)-sn-glycero-3-phosphoethanolamine. The catalysed reaction is 2-(prostaglandin G2)-sn-glycero-3-phosphoethanolamine + AH2 = 2-(prostaglandin H2)-sn-glycero-3-phosphoethanolamine + A + H2O. The enzyme catalyses 2-(5Z,8Z,11Z,14Z)-eicosatetraenoyl-sn-glycero-3-phosphocholine + 2 O2 = 2-(prostaglandin G2)-sn-glycero-3-phosphocholine. It catalyses the reaction 2-(prostaglandin G2)-sn-glycero-3-phosphocholine + AH2 = 2-(prostaglandin H2)-sn-glycero-3-phosphocholine + A + H2O. It carries out the reaction (15S)-hydroperoxy-(5Z,8Z,11Z,13E)-eicosatetraenoate + AH2 = (15S)-hydroxy-(5Z,8Z,11Z,13E)-eicosatetraenoate + A + H2O. The catalysed reaction is 2-(5Z,8Z,11Z,14Z)-eicosatetraenoyl-sn-glycero-3-phosphocholine + AH2 + O2 = 2-[(15S)-hydroxy-(5Z,8Z,11Z,13E)-eicosatetraenoyl]-sn-glycero-3-phosphocholine + A + H2O. The enzyme catalyses 2-(5Z,8Z,11Z,14Z)-eicosatetraenoyl-sn-glycero-3-phosphocholine + AH2 + O2 = 2-[(15R)-hydroxy-(5Z,8Z,11Z,13E)-eicosatetraenoyl]-sn-glycero-3-phosphocholine + A + H2O. It catalyses the reaction 2-(5Z,8Z,11Z,14Z)-eicosatetraenoyl-sn-glycero-3-phosphocholine + AH2 + O2 = 2-[(11R)-hydroxy-(5Z,8Z,12E,14Z)-eicosatetraenoyl]-sn-glycero-3-phosphocholine + A + H2O. It carries out the reaction (9Z,12Z)-octadecadienoate + AH2 + O2 = 9-hydroxy-(10E,12Z)-octadecadienoate + A + H2O. The catalysed reaction is (9Z,12Z)-octadecadienoate + AH2 + O2 = 13-hydroxy-(9Z,11E)-octadecadienoate + A + H2O. The enzyme catalyses (5Z,8Z,11Z,14Z)-eicosatetraenoate + AH2 + O2 = (15R)-hydroxy-(5Z,8Z,11Z,13E)-eicosatetraenoate + A + H2O. It catalyses the reaction (5Z,8Z,11Z,14Z)-eicosatetraenoate + AH2 + O2 = (11R)-hydroxy-(5Z,8Z,12E,14Z)-eicosatetraenoate + A + H2O. It carries out the reaction (5Z,8Z,11Z,14Z,17Z)-eicosapentaenoate + AH2 + O2 = (11R)-hydroxy-(5Z,8Z,12E,14Z,17Z)-eicosapentaenoate + A + H2O. The catalysed reaction is (5Z,8Z,11Z,14Z,17Z)-eicosapentaenoate + AH2 + O2 = (18S)-hydroxy-(5Z,8Z,11Z,14Z,16E)-eicosapentaenoate + A + H2O. The enzyme catalyses (5Z,8Z,11Z,14Z,17Z)-eicosapentaenoate + AH2 + O2 = (18R)-hydroxy-(5Z,8Z,11Z,14Z,16E)-eicosapentaenoate + A + H2O. It catalyses the reaction (5Z,8Z,11Z,14Z,17Z)-eicosapentaenoate + AH2 + O2 = (15R)-hydroxy-(5Z,8Z,11Z,13E,17Z)-eicosapentaenoate + A + H2O. It carries out the reaction (5Z,8Z,11Z,14Z,17Z)-eicosapentaenoate + AH2 + O2 = (15S)-hydroxy-(5Z,8Z,11Z,13E,17Z)-eicosapentaenoate + A + H2O. The catalysed reaction is (7Z,10Z,13Z,16Z,19Z)-docosapentaenoate + AH2 + O2 = 13R-hydroxy-(7Z,10Z,14E,16Z,19Z)-docosapentaenoate + A + H2O. The enzyme catalyses (4Z,7Z,10Z,13Z,16Z,19Z)-docosahexaenoate + AH2 + O2 = 13-hydroxy-(4Z,7Z,10Z,14E,16Z,19Z)-docosahexaenoate + A + H2O. It catalyses the reaction (5S)-hydroxy-(6E,8Z,11Z,14Z)-eicosatetraenoate + AH2 + O2 = (5S,15R)-dihydroxy-(6E,8Z,11Z,13E)-eicosatetraenoate + A + H2O. It carries out the reaction (4Z,7Z,10Z,13Z,16Z,19Z)-docosahexaenoate + AH2 + O2 = 17R-hydroxy-(4Z,7Z,10Z,13Z,15E,19Z)-docosahexaenoate + A + H2O. The catalysed reaction is (5S)-hydroxy-(6E,8Z,11Z,14Z)-eicosatetraenoate + AH2 + O2 = (5S,15S)-dihydroxy-(6E,8Z,11Z,13E)-eicosatetraenoate + A + H2O. The enzyme catalyses (5S)-hydroxy-(6E,8Z,11Z,14Z)-eicosatetraenoate + AH2 + O2 = (5S,11R)-dihydroxy-(6E,8Z,12E,14Z)-eicosatetraenoate + A + H2O. It catalyses the reaction 2-(5Z,8Z,11Z,14Z-eicosatetraenoyl)-glycerol + 2 O2 = 2-glyceryl-prostaglandin G2. It carries out the reaction 2-glyceryl-prostaglandin G2 + AH2 = 2-glyceryl-prostaglandin H2 + A + H2O. The catalysed reaction is (5Z,8Z,11Z,14Z)-eicosatetraenoate + O2 = (15R)-hydroperoxy-(5Z,8Z,11Z,13E)-eicosatetraenoate. The enzyme catalyses (5Z,8Z,11Z,14Z)-eicosatetraenoate + O2 = 11R-hydroperoxy-(5Z,8Z,12E,14Z)-eicosatetraenoate. It catalyses the reaction (9Z,12Z)-octadecadienoate + AH2 + O2 = (9R)-hydroxy-(10E,12Z)-octadecadienoate + A + H2O. It carries out the reaction (9Z,12Z)-octadecadienoate + AH2 + O2 = (9S)-hydroxy-(10E,12Z)-octadecadienoate + A + H2O. The catalysed reaction is (9Z,12Z)-octadecadienoate + AH2 + O2 = (13S)-hydroxy-(9Z,11E)-octadecadienoate + A + H2O. The enzyme catalyses (9Z,12Z)-octadecadienoate + AH2 + O2 = (13R)-hydroxy-(9Z,11E)-octadecadienoate + A + H2O. It functions in the pathway lipid metabolism; prostaglandin biosynthesis. Its function is as follows. Dual cyclooxygenase and peroxidase in the biosynthesis pathway of prostanoids, a class of C20 oxylipins mainly derived from arachidonate ((5Z,8Z,11Z,14Z)-eicosatetraenoate, AA, C20:4(n-6)), with a particular role in the inflammatory response. The cyclooxygenase activity oxygenates AA to the hydroperoxy endoperoxide prostaglandin G2 (PGG2), and the peroxidase activity reduces PGG2 to the hydroxy endoperoxide prostaglandin H2 (PGH2), the precursor of all 2-series prostaglandins and thromboxanes. This complex transformation is initiated by abstraction of hydrogen at carbon 13 (with S-stereochemistry), followed by insertion of molecular O2 to form the endoperoxide bridge between carbon 9 and 11 that defines prostaglandins. The insertion of a second molecule of O2 (bis-oxygenase activity) yields a hydroperoxy group in PGG2 that is then reduced to PGH2 by two electrons. Similarly catalyzes successive cyclooxygenation and peroxidation of dihomo-gamma-linoleate (DGLA, C20:3(n-6)) and eicosapentaenoate (EPA, C20:5(n-3)) to corresponding PGH1 and PGH3, the precursors of 1- and 3-series prostaglandins. In an alternative pathway of prostanoid biosynthesis, converts 2-arachidonoyl lysophopholipids to prostanoid lysophopholipids, which are then hydrolyzed by intracellular phospholipases to release free prostanoids. Metabolizes 2-arachidonoyl glycerol yielding the glyceryl ester of PGH2, a process that can contribute to pain response. Generates lipid mediators from n-3 and n-6 polyunsaturated fatty acids (PUFAs) via a lipoxygenase-type mechanism. Oxygenates PUFAs to hydroperoxy compounds and then reduces them to corresponding alcohols. Plays a role in the generation of resolution phase interaction products (resolvins) during both sterile and infectious inflammation. Metabolizes docosahexaenoate (DHA, C22:6(n-3)) to 17R-HDHA, a precursor of the D-series resolvins (RvDs). As a component of the biosynthetic pathway of E-series resolvins (RvEs), converts eicosapentaenoate (EPA, C20:5(n-3)) primarily to 18S-HEPE that is further metabolized by ALOX5 and LTA4H to generate 18S-RvE1 and 18S-RvE2. In vascular endothelial cells, converts docosapentaenoate (DPA, C22:5(n-3)) to 13R-HDPA, a precursor for 13-series resolvins (RvTs) shown to activate macrophage phagocytosis during bacterial infection. In activated leukocytes, contributes to oxygenation of hydroxyeicosatetraenoates (HETE) to diHETES (5,15-diHETE and 5,11-diHETE). Can also use linoleate (LA, (9Z,12Z)-octadecadienoate, C18:2(n-6)) as substrate and produce hydroxyoctadecadienoates (HODEs) in a regio- and stereospecific manner, being (9R)-HODE ((9R)-hydroxy-(10E,12Z)-octadecadienoate) and (13S)-HODE ((13S)-hydroxy-(9Z,11E)-octadecadienoate) its major products. During neuroinflammation, plays a role in neuronal secretion of specialized preresolving mediators (SPMs) 15R-lipoxin A4 that regulates phagocytic microglia. The polypeptide is Prostaglandin G/H synthase 2 (PTGS2) (Bos taurus (Bovine)).